The primary structure comprises 517 residues: Tyrosine-protein kinase Src42A (517 aa).

Residues 1 to 47 (MGNCLTTQKGEPDKPADRIKLDDPPTIGVGVGVPQIPMPSHAGQPPE) are disordered. Positions 10–23 (GEPDKPADRIKLDD) are enriched in basic and acidic residues. Residues 63–124 (ANAKIFVALY…PSNYVAKLKS (62 aa)) enclose the SH3 domain. In terms of domain architecture, SH2 spans 130 to 222 (WYFRKIKRIE…GLCVNLCKPC (93 aa)). One can recognise a Protein kinase domain in the interval 248 to 504 (LKFVRKLGSG…TLQWKLEDFY (257 aa)). ATP contacts are provided by residues 254–262 (LGSGQFGDV) and Lys276. Asp370 acts as the Proton acceptor in catalysis.

The protein belongs to the protein kinase superfamily. Tyr protein kinase family. SRC subfamily. As to expression, ubiquitous in early embryos, in stages 13-16 expression is seen in visceral mesoderm, hindgut, brain, anal pads and ventral ganglions. In larvae, expression is in CNS, wing disk, leg disk and photoreceptor precursors in the eye-antenna disks posterior to the morphogenetic furrow.

It catalyses the reaction L-tyrosyl-[protein] + ATP = O-phospho-L-tyrosyl-[protein] + ADP + H(+). Its function is as follows. Required directly or indirectly for the phosphorylation of drpr which is necessary for the interaction of drpr with shark and subsequent glial phagocytic activity. Together with drpr and shark, promotes the migration of macrophages to sites of wounding as part of a signaling cascade where Src42A detects production of hydrogen peroxide at wound sites which triggers phosphorylation of drpr and subsequent recruitment and activation of shark. Essential for correct eye morphogenesis (ommatidial R7 neuron formation) which requires the Ras1/MAPK signal transduction pathway. May be involved in the regulation of cytoskeleton organization and cell-cell contacts in developing ommatidia. Involved in phosphorylation of Dscam1, a cell surface receptor involved in targeting of growing axons during eye morphogenesis, and its interaction partner the SH2/SH3 adapter protein dock/dreadlocks. During embryogenesis, involved in regulation of dorsal closure where it may have a role in activating the JNK pathway in leading edge cells during this process. The sequence is that of Tyrosine-protein kinase Src42A from Drosophila melanogaster (Fruit fly).